A 325-amino-acid polypeptide reads, in one-letter code: Small ribosomal subunit protein RACK1 (325 aa).

WD repeat units lie at residues 13 to 44 (AHTD…ILWH), 61 to 91 (GHSH…RLWD), 103 to 133 (GHTK…KLWN), 147 to 179 (AHSD…KVWN), 191 to 221 (GHSG…LLWD), 232 to 261 (DAGS…KIWD), and 291 to 321 (KKVI…RVWG).

This sequence belongs to the WD repeat G protein beta family. Ribosomal protein RACK1 subfamily.

In terms of biological role, plays a role in hormone-mediated cell division. This chain is Small ribosomal subunit protein RACK1 (GB1), found in Medicago sativa (Alfalfa).